The chain runs to 613 residues: Serine protease FAM111A (613 aa).

Residues 1–72 are disordered; the sequence is MSCKKRKSQI…TRQDQTPPLN (72 aa). Lysine 19 is covalently cross-linked (Glycyl lysine isopeptide (Lys-Gly) (interchain with G-Cter in SUMO2)). Phosphoserine is present on serine 25. Residue lysine 29 forms a Glycyl lysine isopeptide (Lys-Gly) (interchain with G-Cter in SUMO2) linkage. Positions 40–56 are enriched in basic and acidic residues; it reads VDSKKMPRDITNTRDQR. A Glycyl lysine isopeptide (Lys-Gly) (interchain with G-Cter in SUMO2) cross-link involves residue lysine 62. Active-site charge relay system residues include histidine 383, aspartate 437, and serine 543.

This sequence belongs to the FAM111 family. In terms of assembly, interacts (via PIP-box) with PCNA; this interaction is direct. Post-translationally, autocatalytically cleaved; autocatalytic cleavage takes place in trans.

It localises to the nucleus. It is found in the chromosome. The protein resides in the cytoplasm. Its function is as follows. Single-stranded DNA-binding serine protease that mediates the proteolytic cleavage of covalent DNA-protein cross-links (DPCs) during DNA synthesis, thereby playing a key role in maintaining genomic integrity. DPCs are highly toxic DNA lesions that interfere with essential chromatin transactions, such as replication and transcription, and which are induced by reactive agents, such as UV light or formaldehyde. Protects replication fork from stalling by removing DPCs, such as covalently trapped topoisomerase 1 (TOP1) adducts on DNA lesion, or poly(ADP-ribose) polymerase 1 (PARP1)-DNA complexes trapped by PARP inhibitors. Required for PCNA loading on replication sites. Promotes S-phase entry and DNA synthesis. This is Serine protease FAM111A from Mus musculus (Mouse).